The chain runs to 1627 residues: Adhesin P1 (1627 aa).

An N-terminal signal peptide occupies residues 1–59 (MHQTKKTALSKSTWILILTATASLATGLTVVGHFTSTTTTLKRQQFSYTRPDEVALRHT). Disordered stretches follow at residues 219 to 238 (LPQQ…AMFG), 252 to 355 (NEKL…PWRP), 898 to 953 (WRND…TTQD), and 1274 to 1362 (SFGT…TGND). A compositionally biased stretch (polar residues) spans 224–234 (TESGQNTSTTG). A compositionally biased stretch (low complexity) spans 261–276 (TGSSTTSGSGQSTQRG). Basic and acidic residues predominate over residues 282–297 (TKVKALKIEVKKKSDS). Composition is skewed to polar residues over residues 903-933 (ASSG…SAGN), 939-953 (QDNI…TTQD), and 1274-1297 (SFGT…VFGT). Residues 1307–1320 (SGGGAGGGSSGSGQ) show a composition bias toward gly residues. Low complexity predominate over residues 1341–1352 (STSDGNTSSTNN). The cytadherence epitope stretch occupies residues 1403–1415 (GPQSVKFKSPDQI). Residues 1527-1547 (AITVPIVVIVLSVTLGLAIGI) form a helical membrane-spanning segment. The disordered stretch occupies residues 1589 to 1627 (QAPKRLKQTSAAKPGAPRPPVPPKPGAPKPPVQPPKKPA). A compositionally biased stretch (pro residues) spans 1604-1627 (APRPPVPPKPGAPKPPVQPPKKPA).

The protein belongs to the adhesin P1 family.

It localises to the cell membrane. It is found in the cell projection. Its subcellular location is the attachment organelle. The protein localises to the cell surface. The protein is the major adhesin mediating the attachment of this mycoplasma to respiratory epithelium. This chain is Adhesin P1 (mgpA), found in Mycoplasma pneumoniae (strain ATCC 29342 / M129 / Subtype 1) (Mycoplasmoides pneumoniae).